The sequence spans 399 residues: Elongation factor Tu (399 aa).

Residues 10–209 (KPHVNIGTIG…AVDSYIPTPV (200 aa)) form the tr-type G domain. The tract at residues 19 to 26 (GHVDHGKT) is G1. GTP is bound at residue 19-26 (GHVDHGKT). T26 provides a ligand contact to Mg(2+). Residues 60-64 (GITIA) form a G2 region. The G3 stretch occupies residues 81–84 (DCPG). GTP contacts are provided by residues 81 to 85 (DCPGH) and 136 to 139 (NKAD). The G4 stretch occupies residues 136–139 (NKAD). The interval 174 to 176 (SAL) is G5.

The protein belongs to the TRAFAC class translation factor GTPase superfamily. Classic translation factor GTPase family. EF-Tu/EF-1A subfamily. In terms of assembly, monomer.

The protein resides in the cytoplasm. The catalysed reaction is GTP + H2O = GDP + phosphate + H(+). Functionally, GTP hydrolase that promotes the GTP-dependent binding of aminoacyl-tRNA to the A-site of ribosomes during protein biosynthesis. This is Elongation factor Tu from Campylobacter fetus subsp. fetus (strain 82-40).